A 445-amino-acid chain; its full sequence is Cyclic GMP-AMP phosphodiesterase SMPDL3A (445 aa).

The signal sequence occupies residues 1 to 22 (MALLGNFLCCLLVAWLCGPGLG). The Zn(2+) site is built by aspartate 42 and histidine 44. A disulfide bridge connects residues cysteine 59 and cysteine 78. Asparagine 66 is a glycosylation site (N-linked (GlcNAc...) asparagine). Aspartate 107 lines the Zn(2+) pocket. ATP is bound at residue histidine 111. N-linked (GlcNAc...) asparagine glycosylation is present at asparagine 128. Zn(2+) is bound at residue asparagine 148. The ATP site is built by asparagine 148 and histidine 149. 2 N-linked (GlcNAc...) asparagine glycosylation sites follow: asparagine 219 and asparagine 235. Histidine 249 serves as a coordination point for Zn(2+). ATP is bound at residue tyrosine 257. Residues histidine 290 and histidine 292 each coordinate Zn(2+). N-linked (GlcNAc...) asparagine glycosylation is found at asparagine 353 and asparagine 364. 2 disulfides stabilise this stretch: cysteine 417/cysteine 421 and cysteine 427/cysteine 440.

Belongs to the acid sphingomyelinase family. Monomer. Homodimer; homodimerizes following 2',3'-cGAMP-binding. Zn(2+) serves as cofactor. In terms of processing, N-glycosylated. Detected in blood serum (at protein level).

It localises to the secreted. The catalysed reaction is 2',3'-cGAMP + H2O = 5'-pGpA(2'-5') + H(+). The enzyme catalyses 5'-pGpA(2'-5') + H2O = 5'-GpA(2'-5') + phosphate. It carries out the reaction a ribonucleoside 5'-triphosphate + H2O = a ribonucleoside 5'-diphosphate + phosphate + H(+). It catalyses the reaction ATP + H2O = ADP + phosphate + H(+). With respect to regulation, requires micromolar levels of Zn(2+) for activity. Inhibited by millimolar levels of Zn(2+). Its function is as follows. Cyclic-nucleotide phosphodiesterase that acts as a negative regulator of innate immunity by mediating degradation of 2',3'-cGAMP, thereby inhibiting the cGAS-STING signaling. Specifically linearizes 2',3'-cGAMP into 2'5'-bond pGpA and further hydrolyzes pGpA to produce GpA. Also has in vitro nucleotide phosphodiesterase activity with nucleoside triphosphates, such as ATP. Has in vitro activity with p-nitrophenyl-TMP. Has lower activity with nucleoside diphosphates, and no activity with nucleoside monophosphates. Has in vitro activity with CDP-choline, giving rise to CMP and phosphocholine. Has in vitro activity with CDP-ethanolamine. Does not have sphingomyelin phosphodiesterase activity. The protein is Cyclic GMP-AMP phosphodiesterase SMPDL3A of Mus musculus (Mouse).